The chain runs to 516 residues: UvrABC system protein C (516 aa).

The region spanning 9 to 87 (HLPGCYLFKD…IKKHWPRYNI (79 aa)) is the GIY-YIG domain. The region spanning 191-226 (GELIESMEKEMKKMAAKQMFEQAMALRDEISALEYL) is the UVR domain.

This sequence belongs to the UvrC family. As to quaternary structure, interacts with UvrB in an incision complex.

It localises to the cytoplasm. In terms of biological role, the UvrABC repair system catalyzes the recognition and processing of DNA lesions. UvrC both incises the 5' and 3' sides of the lesion. The N-terminal half is responsible for the 3' incision and the C-terminal half is responsible for the 5' incision. The sequence is that of UvrABC system protein C from Methanosarcina acetivorans (strain ATCC 35395 / DSM 2834 / JCM 12185 / C2A).